The sequence spans 39 residues: Cytochrome b559 subunit beta (39 aa).

Residues W14 to S30 traverse the membrane as a helical segment. Residue H18 participates in heme binding.

It belongs to the PsbE/PsbF family. In terms of assembly, heterodimer of an alpha subunit and a beta subunit. PSII is composed of 1 copy each of membrane proteins PsbA, PsbB, PsbC, PsbD, PsbE, PsbF, PsbH, PsbI, PsbJ, PsbK, PsbL, PsbM, PsbT, PsbX, PsbY, PsbZ, Psb30/Ycf12, at least 3 peripheral proteins of the oxygen-evolving complex and a large number of cofactors. It forms dimeric complexes. Heme b serves as cofactor.

It localises to the plastid. The protein resides in the chloroplast thylakoid membrane. In terms of biological role, this b-type cytochrome is tightly associated with the reaction center of photosystem II (PSII). PSII is a light-driven water:plastoquinone oxidoreductase that uses light energy to abstract electrons from H(2)O, generating O(2) and a proton gradient subsequently used for ATP formation. It consists of a core antenna complex that captures photons, and an electron transfer chain that converts photonic excitation into a charge separation. The polypeptide is Cytochrome b559 subunit beta (Adiantum capillus-veneris (Maidenhair fern)).